We begin with the raw amino-acid sequence, 400 residues long: Putative niacin/nicotinamide transporter NiaP (400 aa).

At 1-14 the chain is on the cytoplasmic side; it reads MGKQQPISQRKLLG. Residues 15-35 traverse the membrane as a helical segment; it reads VAGLGWLFDAMDVGILSFIIA. The Extracellular portion of the chain corresponds to 36 to 49; it reads ALHVEWNLSPEEMK. Residues 50 to 70 traverse the membrane as a helical segment; sequence WIGSVNSIGMAAGAFLFGLLA. The Cytoplasmic segment spans residues 71 to 77; the sequence is DRIGRKK. 2 helical membrane passes run 78–98 and 99–119; these read VFII…FVTS and LSAF…ELPV. Topologically, residues 120–142 are cytoplasmic; the sequence is ASTLVSEAVVPEKRGRVIVLLES. The helical transmembrane segment at 143–163 threads the bilayer; sequence FWAVGWLAAALISYFVIPSFG. Residues 164–165 are Extracellular-facing; it reads WQ. The chain crosses the membrane as a helical span at residues 166-186; that stretch reads AALLLTALTAFYALYLRTSLP. Topologically, residues 187-217 are cytoplasmic; it reads DSPKYESLSAKKRSMWENVKSVWARQYIRPT. Residues 218 to 238 form a helical membrane-spanning segment; that stretch reads VMLSIVWFCVVFSYYGMFLWL. Over 239–253 the chain is Extracellular; sequence PSVMLLKGFSMIQSF. A helical transmembrane segment spans residues 254–274; it reads EYVLLMTLAQLPGYFSAAWLI. The Cytoplasmic portion of the chain corresponds to 275–280; that stretch reads EKAGRK. Residues 281 to 301 traverse the membrane as a helical segment; sequence WILVVYLIGTAGSAYFFGTAD. The Extracellular segment spans residues 302-304; it reads SLS. A helical membrane pass occupies residues 305-325; it reads LLLTAGVLLSFFNLGAWGVLY. Residues 326–343 lie on the Cytoplasmic side of the membrane; the sequence is AYTPEQYPTAIRATGSGT. Residues 344-364 traverse the membrane as a helical segment; the sequence is TAAFGRIGGIFGPLLVGTLAA. Residues 365–370 are Extracellular-facing; sequence RHISFS. The helical transmembrane segment at 371–391 threads the bilayer; the sequence is VIFSIFCIAILLAVACILIMG. Topologically, residues 392-400 are cytoplasmic; sequence KETKQTELE.

It belongs to the major facilitator superfamily. Sugar transporter (TC 2.A.1.1) family.

The protein resides in the cell membrane. Its function is as follows. Probably involved in the uptake of amidated and deamidated forms of niacin. Increases the growth rate of E.coli that is unable to make niacin de novo; confers increased sensitivity to the toxic niacin analog 6-amino-nicotinamide to wild-type E.coli. There is probably another mechanism for niacin uptake. The sequence is that of Putative niacin/nicotinamide transporter NiaP from Bacillus subtilis (strain 168).